Here is a 281-residue protein sequence, read N- to C-terminus: uncharacterized protein (281 aa).

Its subcellular location is the plastid. The protein resides in the chloroplast. This is an uncharacterized protein from Euglena gracilis.